Consider the following 121-residue polypeptide: LSM complex subunit lsm4 (121 aa).

The 74-residue stretch at 2-75 folds into the Sm domain; it reads LPLTLLNATQ…IKYLRIQDEV (74 aa). Residues 82-121 are disordered; that stretch reads QQAQQRENRGSRFRGRGQRGRGNYGHTAPNRRGRGRGGHM. Over residues 110–121 the composition is skewed to basic residues; sequence PNRRGRGRGGHM.

Belongs to the snRNP Sm proteins family. As to quaternary structure, component of the heptameric LSM1-LSM7 complex that forms a seven-membered ring structure with a donut shape. The LSm subunits are arranged in the order lsm1, lsm2, lsm3, lsm6, lsm5, lsm7 and lsm4. Component of the heptameric LSM2-LSM8 complex that forms a seven-membered ring structure with a donut shape. The LSm subunits are arranged in the order lsm8, lsm2, lsm3, lsm6, lsm5, lsm7 and lsm4.

It localises to the nucleus. The protein resides in the cytoplasm. Its function is as follows. Component of LSm protein complexes, which are involved in RNA processing and may function in a chaperone-like manner. Component of the cytoplasmic LSM1-LSM7 complex which is involved in mRNA degradation by activating the decapping step. The LSM1-LSM7 complex loads onto the 3'-end of single stranded RNA. Component of the nuclear LSM2-LSM8 complex, which is involved in spliceosome assembly. The LSM2-LSM8 complex plays a role in the biogenesis of the spliceosomal U4/U6-U5 tri-snRNP complex by accelerating prp24-mediated annealing of U4/U6 di-snRNA. The LSM2-LSM8 complex binds U6 snRNA terminating with a cyclic 2',3' phosphate group; RNA with an unmodified 3' hydroxyl or non-cyclic 3' phosphate is bound less tightly. This Schizosaccharomyces pombe (strain 972 / ATCC 24843) (Fission yeast) protein is LSM complex subunit lsm4 (lsm4).